A 349-amino-acid polypeptide reads, in one-letter code: Protein BPS1, chloroplastic (349 aa).

A chloroplast-targeting transit peptide spans 1–43; sequence MARPQDPPRGFFPFGNPFKNLSSKNSVLSSKLLPLLNNFETNL.

In terms of tissue distribution, expressed in roots, hypocotyls, cotyledons, leaves, flowers and siliques.

It localises to the plastid. Its subcellular location is the chloroplast. Required for normal root and shoot development. Prevents constitutive production of a root mobile carotenoid-derived signaling compound that is capable of arresting shoot and leaf development. In Arabidopsis thaliana (Mouse-ear cress), this protein is Protein BPS1, chloroplastic.